Consider the following 189-residue polypeptide: Orotate phosphoribosyltransferase (189 aa).

Residues R94, K95, K98, and E120–S128 contribute to the 5-phospho-alpha-D-ribose 1-diphosphate site. T124 and R152 together coordinate orotate.

This sequence belongs to the purine/pyrimidine phosphoribosyltransferase family. PyrE subfamily. As to quaternary structure, homodimer. It depends on Mg(2+) as a cofactor.

The catalysed reaction is orotidine 5'-phosphate + diphosphate = orotate + 5-phospho-alpha-D-ribose 1-diphosphate. The protein operates within pyrimidine metabolism; UMP biosynthesis via de novo pathway; UMP from orotate: step 1/2. Catalyzes the transfer of a ribosyl phosphate group from 5-phosphoribose 1-diphosphate to orotate, leading to the formation of orotidine monophosphate (OMP). The chain is Orotate phosphoribosyltransferase from Thermococcus gammatolerans (strain DSM 15229 / JCM 11827 / EJ3).